The sequence spans 101 residues: Small ribosomal subunit protein uS14 (101 aa).

The tract at residues 53–72 (RDAAAVRVRNRDSHDGRPRG) is disordered. The span at 61-70 (RNRDSHDGRP) shows a compositional bias: basic and acidic residues.

This sequence belongs to the universal ribosomal protein uS14 family. In terms of assembly, part of the 30S ribosomal subunit. Contacts proteins S3 and S10.

Binds 16S rRNA, required for the assembly of 30S particles and may also be responsible for determining the conformation of the 16S rRNA at the A site. In Corynebacterium glutamicum (strain R), this protein is Small ribosomal subunit protein uS14.